An 844-amino-acid polypeptide reads, in one-letter code: DNA mismatch repair protein MutS (844 aa).

Residue 610–617 coordinates ATP; it reads GPNMGGKS.

It belongs to the DNA mismatch repair MutS family.

Its function is as follows. This protein is involved in the repair of mismatches in DNA. It is possible that it carries out the mismatch recognition step. This protein has a weak ATPase activity. This chain is DNA mismatch repair protein MutS, found in Francisella tularensis subsp. mediasiatica (strain FSC147).